Consider the following 504-residue polypeptide: Light-independent protochlorophyllide reductase subunit B (504 aa).

Aspartate 36 serves as a coordination point for [4Fe-4S] cluster. Aspartate 279 functions as the Proton donor in the catalytic mechanism. Glycine 414 to leucine 415 contacts substrate.

This sequence belongs to the ChlB/BchB/BchZ family. In terms of assembly, protochlorophyllide reductase is composed of three subunits; BchL, BchN and BchB. Forms a heterotetramer of two BchB and two BchN subunits. [4Fe-4S] cluster is required as a cofactor.

The catalysed reaction is chlorophyllide a + oxidized 2[4Fe-4S]-[ferredoxin] + 2 ADP + 2 phosphate = protochlorophyllide a + reduced 2[4Fe-4S]-[ferredoxin] + 2 ATP + 2 H2O. Its pathway is porphyrin-containing compound metabolism; bacteriochlorophyll biosynthesis (light-independent). Its function is as follows. Component of the dark-operative protochlorophyllide reductase (DPOR) that uses Mg-ATP and reduced ferredoxin to reduce ring D of protochlorophyllide (Pchlide) to form chlorophyllide a (Chlide). This reaction is light-independent. The NB-protein (BchN-BchB) is the catalytic component of the complex. This is Light-independent protochlorophyllide reductase subunit B from Acidiphilium rubrum.